The sequence spans 302 residues: Short-chain dehydrogenase/reductase 3 (302 aa).

Helical transmembrane passes span 9 to 29, 170 to 190, 195 to 215, and 253 to 273; these read LVVF…GLVL, IVCL…DYCT, AFAF…VSAT, and AVQL…LIIL. Ser175 lines the substrate pocket. The Proton acceptor role is filled by Tyr188.

The protein belongs to the short-chain dehydrogenases/reductases (SDR) family. As to expression, in the retina, expressed in cone but not rod outer segments.

The protein localises to the membrane. It catalyses the reaction all-trans-retinol + NADP(+) = all-trans-retinal + NADPH + H(+). Catalyzes the reduction of all-trans-retinal to all-trans-retinol in the presence of NADPH. The sequence is that of Short-chain dehydrogenase/reductase 3 (DHRS3) from Bos taurus (Bovine).